Consider the following 312-residue polypeptide: DNA-directed RNA polymerase subunit alpha (312 aa).

An alpha N-terminal domain (alpha-NTD) region spans residues 1-229; sequence MLQYQIDRIE…ELFQPLATVT (229 aa). The interval 246 to 312 is alpha C-terminal domain (alpha-CTD); the sequence is IPLEELNLSV…ISIPQSRTSA (67 aa).

Belongs to the RNA polymerase alpha chain family. As to quaternary structure, in cyanobacteria the RNAP catalytic core is composed of 2 alpha, 1 beta, 1 beta', 1 gamma and 1 omega subunit. When a sigma factor is associated with the core the holoenzyme is formed, which can initiate transcription.

The enzyme catalyses RNA(n) + a ribonucleoside 5'-triphosphate = RNA(n+1) + diphosphate. In terms of biological role, DNA-dependent RNA polymerase catalyzes the transcription of DNA into RNA using the four ribonucleoside triphosphates as substrates. In Prochlorococcus marinus (strain SARG / CCMP1375 / SS120), this protein is DNA-directed RNA polymerase subunit alpha.